The chain runs to 316 residues: Ribosomal RNA small subunit methyltransferase H (316 aa).

Residues 35 to 37 (AGH), D55, F84, D105, and Q112 contribute to the S-adenosyl-L-methionine site.

It belongs to the methyltransferase superfamily. RsmH family.

It localises to the cytoplasm. The catalysed reaction is cytidine(1402) in 16S rRNA + S-adenosyl-L-methionine = N(4)-methylcytidine(1402) in 16S rRNA + S-adenosyl-L-homocysteine + H(+). In terms of biological role, specifically methylates the N4 position of cytidine in position 1402 (C1402) of 16S rRNA. In Streptococcus pneumoniae (strain Taiwan19F-14), this protein is Ribosomal RNA small subunit methyltransferase H.